The chain runs to 284 residues: Bifunctional protein FolD (284 aa).

Residues 166–168 (GAS) and Ile-232 contribute to the NADP(+) site.

It belongs to the tetrahydrofolate dehydrogenase/cyclohydrolase family. In terms of assembly, homodimer.

The enzyme catalyses (6R)-5,10-methylene-5,6,7,8-tetrahydrofolate + NADP(+) = (6R)-5,10-methenyltetrahydrofolate + NADPH. It carries out the reaction (6R)-5,10-methenyltetrahydrofolate + H2O = (6R)-10-formyltetrahydrofolate + H(+). The protein operates within one-carbon metabolism; tetrahydrofolate interconversion. In terms of biological role, catalyzes the oxidation of 5,10-methylenetetrahydrofolate to 5,10-methenyltetrahydrofolate and then the hydrolysis of 5,10-methenyltetrahydrofolate to 10-formyltetrahydrofolate. The chain is Bifunctional protein FolD from Shewanella sp. (strain MR-7).